The following is a 612-amino-acid chain: MPSYRSRISTHGRNMAGARSLWRATGMKESDFGKPIIAIANSFTQFVPGHVHLKDLGQLVAQQIVASGGIAKEFNTIAIDDGIAMGHDGMLYSLPSREIIADSVEYMINAHCADALVCISNCDKITPGMLMASLRLNIPTIFVSGGPMEAGKIKWKDQDLTVDLVDAMVAAAAENNSEEEVAEMERAACPTCGSCSGMFTANSMNCLTEALGLSLPGNGSMLATHADRQMLFEEAGRQIVTLVKRYYEKGDETVLPRSIASRKAFENAMTVDISMGGSTNTVLHLLAAAQEGEVDFTMTEIDRLSRRVPVLCKVAPAVANVHMEDVHRAGGIMGLLGELDAVGLIDTSAYTVHAKTMKEALCRWDVKRTNEPKTHEFYRAAPGGISTQTAFSQSRRYDSLDLDREKGIIRDKEHAYSQDGGLAVLYGNLAKDGCIVKTAGVDQSILTFKGPARIFESQDSAVSAILNDTIQSGDIVLIRYEGPRGGPGMQEMLYPTSYLKSKGLGKVCALITDGRFSGGTSGLSIGHVSPEAAEGGAIALVEEGDIIEIDIPNRTIHMLVEDDELMHRRVKMEAKGKAAWQPTEKRKRKVSKALKAYAAMTTSAAKGAVRNI.

Residue Asp-81 coordinates Mg(2+). Cys-122 contributes to the [2Fe-2S] cluster binding site. 2 residues coordinate Mg(2+): Asp-123 and Lys-124. The residue at position 124 (Lys-124) is an N6-carboxylysine. Cys-195 serves as a coordination point for [2Fe-2S] cluster. Residue Glu-491 participates in Mg(2+) binding. The active-site Proton acceptor is Ser-517.

The protein belongs to the IlvD/Edd family. Homodimer. [2Fe-2S] cluster serves as cofactor. Mg(2+) is required as a cofactor.

The catalysed reaction is (2R)-2,3-dihydroxy-3-methylbutanoate = 3-methyl-2-oxobutanoate + H2O. The enzyme catalyses (2R,3R)-2,3-dihydroxy-3-methylpentanoate = (S)-3-methyl-2-oxopentanoate + H2O. The protein operates within amino-acid biosynthesis; L-isoleucine biosynthesis; L-isoleucine from 2-oxobutanoate: step 3/4. It participates in amino-acid biosynthesis; L-valine biosynthesis; L-valine from pyruvate: step 3/4. Its function is as follows. Functions in the biosynthesis of branched-chain amino acids. Catalyzes the dehydration of (2R,3R)-2,3-dihydroxy-3-methylpentanoate (2,3-dihydroxy-3-methylvalerate) into 2-oxo-3-methylpentanoate (2-oxo-3-methylvalerate) and of (2R)-2,3-dihydroxy-3-methylbutanoate (2,3-dihydroxyisovalerate) into 2-oxo-3-methylbutanoate (2-oxoisovalerate), the penultimate precursor to L-isoleucine and L-valine, respectively. The chain is Dihydroxy-acid dehydratase from Bartonella henselae (strain ATCC 49882 / DSM 28221 / CCUG 30454 / Houston 1) (Rochalimaea henselae).